Reading from the N-terminus, the 192-residue chain is DNA dC-&gt;dU-editing enzyme APOBEC-3Ca (192 aa).

Residues 15–141 (IDPNTFRFHF…PNYQEGLCKL (127 aa)) form the CMP/dCMP-type deaminase domain. Zn(2+) is bound at residue H69. The active-site Proton donor is E71. 2 residues coordinate Zn(2+): C100 and C103.

Belongs to the cytidine and deoxycytidylate deaminase family. In terms of assembly, (Microbial infection) Interacts with feline foamy virus protein Bet. This interaction does not induce APOBEC3Ca degradation but prevents its dimerization and incorporation into the virion. It depends on Zn(2+) as a cofactor.

It localises to the nucleus. The protein resides in the cytoplasm. The catalysed reaction is a 2'-deoxycytidine in single-stranded DNA + H2O + H(+) = a 2'-deoxyuridine in single-stranded DNA + NH4(+). In terms of biological role, DNA deaminase (cytidine deaminase) which acts as an inhibitor of retrovirus replication and retrotransposon mobility via deaminase-dependent and -independent mechanisms. Selectively targets single-stranded DNA and does not deaminate double-stranded DNA or single- or double-stranded RNA. Does not reduce infectivity of foamy feline virus, feline immunodeficiency virus or feline leukemia virus. This Felis catus (Cat) protein is DNA dC-&gt;dU-editing enzyme APOBEC-3Ca.